The chain runs to 51 residues: uncharacterized protein (51 aa).

The tract at residues 1–42 is disordered; that stretch reads MKMKTNKYMNMVRPAPPRRADPEGVRDPSTMGGGPNPFLRRS.

Its subcellular location is the mitochondrion. This is an uncharacterized protein from Saccharomyces cerevisiae (strain ATCC 204508 / S288c) (Baker's yeast).